We begin with the raw amino-acid sequence, 149 residues long: 3-dehydroquinate dehydratase (149 aa).

The active-site Proton acceptor is the Y26. Substrate contacts are provided by N77, H83, and D90. H103 (proton donor) is an active-site residue. Substrate-binding positions include 104–105 (LS) and R114.

This sequence belongs to the type-II 3-dehydroquinase family. Homododecamer.

The enzyme catalyses 3-dehydroquinate = 3-dehydroshikimate + H2O. It participates in metabolic intermediate biosynthesis; chorismate biosynthesis; chorismate from D-erythrose 4-phosphate and phosphoenolpyruvate: step 3/7. Catalyzes a trans-dehydration via an enolate intermediate. In Aeromonas salmonicida (strain A449), this protein is 3-dehydroquinate dehydratase.